Here is a 275-residue protein sequence, read N- to C-terminus: Gamma carbonic anhydrase 1, mitochondrial (275 aa).

The transit peptide at 1–43 directs the protein to the mitochondrion; that stretch reads MGTLGRAFYSVGFWIRETGQALDRLGCRLQGKNYFREQLSRHR. Residues 86–88 and 101–102 each bind substrate; these read RGD and QD. 3 residues coordinate Zn(2+): His107, His130, and His135. Residue Asn209 participates in substrate binding. The segment at 256–275 is disordered; that stretch reads LNLPNNILPDKETKRPSNVN. Residues 264–275 show a composition bias toward basic and acidic residues; sequence PDKETKRPSNVN.

The protein belongs to the gamma-class carbonic anhydrase family. As to quaternary structure, homotrimer. Component of the mitochondrial oxidoreductase respiratory chain complex I; element of the extra matrix-exposed domain, which is attached to the membrane arm of this complex. Zn(2+) serves as cofactor.

The protein resides in the mitochondrion membrane. Enzyme involved in the catabolism of H(2)CO(3) but that does not mediates the reversible hydration of carbon dioxide. Mediates complex I assembly in mitochondria and respiration. This chain is Gamma carbonic anhydrase 1, mitochondrial (GAMMACA1), found in Arabidopsis thaliana (Mouse-ear cress).